The sequence spans 233 residues: Ribosomal RNA large subunit methyltransferase E (233 aa).

S-adenosyl-L-methionine contacts are provided by glycine 80, tryptophan 82, aspartate 108, aspartate 124, and aspartate 148. Residue lysine 188 is the Proton acceptor of the active site.

Belongs to the class I-like SAM-binding methyltransferase superfamily. RNA methyltransferase RlmE family.

It localises to the cytoplasm. The enzyme catalyses uridine(2552) in 23S rRNA + S-adenosyl-L-methionine = 2'-O-methyluridine(2552) in 23S rRNA + S-adenosyl-L-homocysteine + H(+). Functionally, specifically methylates the uridine in position 2552 of 23S rRNA at the 2'-O position of the ribose in the fully assembled 50S ribosomal subunit. This chain is Ribosomal RNA large subunit methyltransferase E, found in Ruegeria pomeroyi (strain ATCC 700808 / DSM 15171 / DSS-3) (Silicibacter pomeroyi).